The primary structure comprises 271 residues: Chorismate dehydratase (271 aa).

This sequence belongs to the MqnA/MqnD family. MqnA subfamily.

It carries out the reaction chorismate = 3-[(1-carboxyvinyl)-oxy]benzoate + H2O. It participates in quinol/quinone metabolism; menaquinone biosynthesis. In terms of biological role, catalyzes the dehydration of chorismate into 3-[(1-carboxyvinyl)oxy]benzoate, a step in the biosynthesis of menaquinone (MK, vitamin K2). This is Chorismate dehydratase from Thermus thermophilus (strain ATCC 27634 / DSM 579 / HB8).